The following is a 441-amino-acid chain: Interferon-related developmental regulator 2 (441 aa).

A compositionally biased stretch (basic residues) spans 1–15; it reads MPRARKGNTPRKGGQ. The disordered stretch occupies residues 1–72; that stretch reads MPRARKGNTP…TVDEQGPQED (72 aa). Acidic residues predominate over residues 63–72; the sequence is TVDEQGPQED.

This sequence belongs to the IFRD family. Associates with ribosomes; promoting ribosome inactivation.

Functionally, ribosome-binding protein that acts as an inhibitor of mRNA translation by promoting ribosome inactivation. Associates with the P- and E-sites of the ribosome and inserts a C-terminal helix into the mRNA exit channel to preclude translation. The protein is Interferon-related developmental regulator 2 of Oryctolagus cuniculus (Rabbit).